Reading from the N-terminus, the 298-residue chain is Putative cysteine protease YopT-like blr2058 (298 aa).

The span at 1-14 shows a compositional bias: basic and acidic residues; the sequence is MYNRVDGEYAHTEQ. Disordered stretches follow at residues 1–25 and 59–80; these read MYNR…ADGS and SDAI…SSSS. A compositionally biased stretch (low complexity) spans 65-80; it reads SSNTSGLSTSSLSSSS. C109 is an active-site residue. Residues 137-162 are compositionally biased toward basic and acidic residues; it reads NHRSAARRQEQSEKLKTQLKEDKAEG. The segment at 137–166 is disordered; sequence NHRSAARRQEQSEKLKTQLKEDKAEGSHNF. Active-site residues include H223 and D238.

Belongs to the peptidase C58 family.

In terms of biological role, potential cysteine protease, which may play a central role after invasion of host cell. The polypeptide is Putative cysteine protease YopT-like blr2058 (Bradyrhizobium diazoefficiens (strain JCM 10833 / BCRC 13528 / IAM 13628 / NBRC 14792 / USDA 110)).